The chain runs to 216 residues: Purine nucleoside phosphorylase DeoD-type (216 aa).

Phosphate contacts are provided by residues R4, R23, and 67–70 (RVGT). A purine D-ribonucleoside contacts are provided by residues 159 to 161 (EME) and 183 to 184 (SD). Catalysis depends on D184, which acts as the Proton donor.

It belongs to the PNP/UDP phosphorylase family. In terms of assembly, homohexamer; trimer of homodimers.

The enzyme catalyses a purine D-ribonucleoside + phosphate = a purine nucleobase + alpha-D-ribose 1-phosphate. The catalysed reaction is a purine 2'-deoxy-D-ribonucleoside + phosphate = a purine nucleobase + 2-deoxy-alpha-D-ribose 1-phosphate. Functionally, catalyzes the reversible phosphorolytic breakdown of the N-glycosidic bond in the beta-(deoxy)ribonucleoside molecules, with the formation of the corresponding free purine bases and pentose-1-phosphate. This Streptococcus thermophilus protein is Purine nucleoside phosphorylase DeoD-type.